A 155-amino-acid chain; its full sequence is Small ribosomal subunit protein uS7cz/uS7cy (155 aa).

It belongs to the universal ribosomal protein uS7 family. As to quaternary structure, part of the 30S ribosomal subunit.

It is found in the plastid. Its subcellular location is the chloroplast. Its function is as follows. One of the primary rRNA binding proteins, it binds directly to 16S rRNA where it nucleates assembly of the head domain of the 30S subunit. In Lotus japonicus (Lotus corniculatus var. japonicus), this protein is Small ribosomal subunit protein uS7cz/uS7cy (rps7-A).